We begin with the raw amino-acid sequence, 213 residues long: Thymidylate kinase (213 aa).

9–16 is a binding site for ATP; it reads GVEGCGKT.

This sequence belongs to the thymidylate kinase family.

It catalyses the reaction dTMP + ATP = dTDP + ADP. In terms of biological role, phosphorylation of dTMP to form dTDP in both de novo and salvage pathways of dTTP synthesis. The protein is Thymidylate kinase of Geotalea uraniireducens (strain Rf4) (Geobacter uraniireducens).